Consider the following 793-residue polypeptide: Kinesin-associated protein 3 (793 aa).

At serine 60 the chain carries Phosphoserine. The span at 103-119 shows a compositional bias: basic and acidic residues; it reads LPGKEKKEKSSKPKDPP. Positions 103–123 are disordered; the sequence is LPGKEKKEKSSKPKDPPPFEG. ARM repeat units follow at residues 333–373, 374–412, 494–533, 578–620, and 621–662; these read FMEN…NLSF, DTGLRNKMVQVGLLPKLTALLGNENYKQIAMCVLYHISM, DGPTKNLFIDYVGDLAAQISSDEEEEFVIECLGTLANLTI, DDSC…QMVF, and HQAT…IIAE.

In terms of assembly, interacts with SMC3 subunit of the cohesin complex. Heterotrimer of KIFAP3, KIF3A and KIF3B. Interacts with RAP1GDS1/SMG GDS. In terms of processing, phosphorylated on tyrosine residues by SRC in vitro; this reduces the binding affinity of the protein for RAP1GDS1.

Involved in tethering the chromosomes to the spindle pole and in chromosome movement. Binds to the tail domain of the KIF3A/KIF3B heterodimer to form a heterotrimeric KIF3 complex and may regulate the membrane binding of this complex. This is Kinesin-associated protein 3 (Kifap3) from Mus musculus (Mouse).